The following is a 976-amino-acid chain: MERKVFSGQNLIWVMLLLVQLRGYKCCIEKERKALLELKKYMISKTADWGLDSVLPTWTNDTKSNCCRWEGLKCNQTSGRIIELSIGQTNFKESSLLNLSLLHPFEELRSLNLSGEIYNEFNGLFDDVEGYESLRRLRNLEILDLSSNSFNNSIFPFLNAATSLTTLFIQSNYIGGPLPIKELKNLTKLELLDLSRSGYNGSIPEFTHLEKLKALDLSANDFSSLVELQELKVLTNLEVLGLAWNHLDGPIPKEVFCEMKNLRQLDLRGNYFEGQLPVCLGNLNKLRVLDLSSNQLSGNLPASFNSLESLEYLSLSDNNFEGFFSLNPLANLTKLKVFRLSSTSEMLQVETESNWLPKFQLTVAALPFCSLGKIPNFLVYQTNLRLVDLSSNRLSGDIPTWLLENNPELKVLQLKNNSFTIFQIPTIVHKLQVLDFSANDITGVLPDNIGHVLPRLLHMNGSHNGFQGNLPSSMGEMNDISFLDLSYNNFSGELPRSLLTGCFSLITLQLSHNSFSGPILPIQTRLTSLIVLRMHNNLFTGEIGVGLRTLVNLSIFDASNNRLTGLISSSIPPDSSHLIMLLLSNNLLEGTLPPSLLAIHHLNFLDLSGNLLSGDLPSSVVNSMYGIKIFLHNNSFTGPLPVTLLENAYILDLRNNKLSGSIPQFVNTGKMITLLLRGNNLTGSIPRKLCDLTSIRLLDLSDNKLNGVIPPCLNHLSTELGEGIGLSGFSQEISFGDSLQMEFYRSTFLVDEFMLYYDSTYMIVEIEFAAKQRYDSFSGGTLDYMYGLDLSSNELSGVIPAELGDLSKLRALNLSRNLLSSSIPANFSKLKDIESLDLSYNMLQGNIPHQLTNLTSLAVFNVSFNNLSGIIPQGGQFNTFNDNSYLGNPLLCGTPTDRSCEGKKNTKEADNGGEEEEEDDDDEAAIDMVVLYWTTGSTYAIALIGILVLMCFDCPWRRTWLCIVDAFIASGKSMFS.

Residues 1 to 26 (MERKVFSGQNLIWVMLLLVQLRGYKC) form the signal peptide. Over 27–928 (CIEKERKALL…DDDDEAAIDM (902 aa)) the chain is Extracellular. Asn-60, Asn-75, Asn-98, Asn-112, Asn-151, Asn-185, and Asn-200 each carry an N-linked (GlcNAc...) asparagine glycan. LRR repeat units lie at residues 105–127 (FEEL…LFDD), 137–160 (LRNL…FLNA), 162–185 (TSLT…ELKN), 186–209 (LTKL…FTHL), 210–233 (EKLK…ELKV), 234–258 (LTNL…VFCE), 260–283 (KNLR…LGNL), 284–306 (NKLR…SFNS), 308–331 (ESLE…PLAN), 333–358 (TKLK…WLPK), 359–381 (FQLT…LVYQ), 382–405 (TNLR…LLEN), 407–428 (PELK…PTIV), 429–452 (HKLQ…IGHV), 454–477 (PRLL…MGEM), 478–501 (NDIS…LLTG), and 503–528 (FSLI…RLTS). Asn-331 carries N-linked (GlcNAc...) asparagine glycosylation. Asn-416 carries an N-linked (GlcNAc...) asparagine glycan. 2 N-linked (GlcNAc...) asparagine glycosylation sites follow: Asn-460 and Asn-489. The stretch at 530–549 (IVLRMHNNLFTGEIGVGLRT) is one LRR 18; degenerate repeat. LRR repeat units lie at residues 550 to 573 (LVNL…SIPP), 575 to 599 (SSHL…LLAI), 600 to 623 (HHLN…VVNS), 625 to 645 (YGIK…VTLL), 646 to 669 (ENAY…VNTG), 671 to 692 (MITL…LCDL), 693 to 715 (TSIR…CLNH), 782 to 805 (LDYM…ELGD), 806 to 829 (LSKL…NFSK), 831 to 854 (KDIE…LTNL), and 856 to 879 (SLAV…QFNT). N-linked (GlcNAc...) asparagine glycosylation occurs at Asn-552. Asn-633 carries N-linked (GlcNAc...) asparagine glycosylation. The N-linked (GlcNAc...) asparagine glycan is linked to Asn-680. Asn-813, Asn-826, Asn-853, Asn-861, and Asn-866 each carry an N-linked (GlcNAc...) asparagine glycan. Residues 897–922 (DRSCEGKKNTKEADNGGEEEEEDDDD) form a disordered region. Over residues 898–910 (RSCEGKKNTKEAD) the composition is skewed to basic and acidic residues. The span at 911–922 (NGGEEEEEDDDD) shows a compositional bias: acidic residues. Residues 929 to 949 (VVLYWTTGSTYAIALIGILVL) form a helical membrane-spanning segment. Residues 950-976 (MCFDCPWRRTWLCIVDAFIASGKSMFS) are Cytoplasmic-facing.

The protein belongs to the RLP family.

The protein resides in the cell membrane. This Arabidopsis thaliana (Mouse-ear cress) protein is Receptor-like protein 14.